The primary structure comprises 160 residues: MSGGAGIPDVPAFDASGVRLAIVASTWHTKICDALLAGARNTAADSGIDNPTVVRVLGAIEIPVVAQELTRNHDAVVALGVVIRGETPHFDYVCDVVTQGLTRVSLDSSTPVANGVLTTNSEEQALNRAGLPTSDEDKGAQATAAALTTALTLRELRAES.

5-amino-6-(D-ribitylamino)uracil is bound by residues Trp-27, 59-61 (AIE), and 81-83 (VVI). Residue 86–87 (ET) coordinates (2S)-2-hydroxy-3-oxobutyl phosphate. The Proton donor role is filled by His-89. Position 114 (Asn-114) interacts with 5-amino-6-(D-ribitylamino)uracil. A (2S)-2-hydroxy-3-oxobutyl phosphate-binding site is contributed by Arg-128.

This sequence belongs to the DMRL synthase family. In terms of assembly, homopentamer.

It carries out the reaction (2S)-2-hydroxy-3-oxobutyl phosphate + 5-amino-6-(D-ribitylamino)uracil = 6,7-dimethyl-8-(1-D-ribityl)lumazine + phosphate + 2 H2O + H(+). The protein operates within cofactor biosynthesis; riboflavin biosynthesis; riboflavin from 2-hydroxy-3-oxobutyl phosphate and 5-amino-6-(D-ribitylamino)uracil: step 1/2. In terms of biological role, catalyzes the formation of 6,7-dimethyl-8-ribityllumazine by condensation of 5-amino-6-(D-ribitylamino)uracil with 3,4-dihydroxy-2-butanone 4-phosphate. This is the penultimate step in the biosynthesis of riboflavin. This Mycobacterium ulcerans (strain Agy99) protein is 6,7-dimethyl-8-ribityllumazine synthase.